The chain runs to 344 residues: tRNA N6-adenosine threonylcarbamoyltransferase (344 aa).

Fe cation is bound by residues H119 and H123. Substrate is bound by residues 141–145 (VVSGG), D174, G187, D191, and N280. A Fe cation-binding site is contributed by D310.

It belongs to the KAE1 / TsaD family. Fe(2+) is required as a cofactor.

The protein resides in the cytoplasm. It catalyses the reaction L-threonylcarbamoyladenylate + adenosine(37) in tRNA = N(6)-L-threonylcarbamoyladenosine(37) in tRNA + AMP + H(+). In terms of biological role, required for the formation of a threonylcarbamoyl group on adenosine at position 37 (t(6)A37) in tRNAs that read codons beginning with adenine. Is involved in the transfer of the threonylcarbamoyl moiety of threonylcarbamoyl-AMP (TC-AMP) to the N6 group of A37, together with TsaE and TsaB. TsaD likely plays a direct catalytic role in this reaction. In Listeria monocytogenes serovar 1/2a (strain ATCC BAA-679 / EGD-e), this protein is tRNA N6-adenosine threonylcarbamoyltransferase.